Here is a 408-residue protein sequence, read N- to C-terminus: Cell division protein FtsZ 2 (408 aa).

Residues 130–132 (GTG), Glu-169, Arg-173, and Asp-216 contribute to the GTP site.

This sequence belongs to the FtsZ family. In terms of assembly, homodimer. Polymerizes to form a dynamic ring structure in a strictly GTP-dependent manner. Interacts directly with several other division proteins.

The protein localises to the cytoplasm. In terms of biological role, essential cell division protein that forms a contractile ring structure (Z ring) at the future cell division site. The regulation of the ring assembly controls the timing and the location of cell division. One of the functions of the FtsZ ring is to recruit other cell division proteins to the septum to produce a new cell wall between the dividing cells. Binds GTP and shows GTPase activity. This chain is Cell division protein FtsZ 2, found in Pyrococcus furiosus (strain ATCC 43587 / DSM 3638 / JCM 8422 / Vc1).